Here is a 371-residue protein sequence, read N- to C-terminus: Phosphatase IMPL1, chloroplastic (371 aa).

The N-terminal 60 residues, 1–60 (MGRSLIFSGNMSLRISHLPRSSLPLQNPISGRTVNRTFRYRCTRILSNSFKSTTRLQTKA), are a transit peptide targeting the chloroplast. Position 61 is an N-acetylvaline (valine 61). 4 residues coordinate Mg(2+): glutamate 148, aspartate 165, leucine 167, and aspartate 168. Residue glutamate 148 coordinates substrate. Residues 167–170 (LDGT), 273–275 (GAA), glutamate 292, and aspartate 299 contribute to the substrate site. Mg(2+) is bound at residue aspartate 299.

The protein belongs to the inositol monophosphatase superfamily. Mg(2+) serves as cofactor. Ubiquitous. Expressed in pistil and seed endosperm.

The protein resides in the plastid. Its subcellular location is the chloroplast stroma. The catalysed reaction is a myo-inositol phosphate + H2O = myo-inositol + phosphate. Its pathway is polyol metabolism; myo-inositol biosynthesis; myo-inositol from D-glucose 6-phosphate: step 2/2. In terms of biological role, phosphatase acting preferentially on D-myoinositol 1-phosphate (D-Ins 1-P). The protein is Phosphatase IMPL1, chloroplastic (IMPL1) of Arabidopsis thaliana (Mouse-ear cress).